The following is a 179-amino-acid chain: ATP synthase subunit delta (179 aa).

Belongs to the ATPase delta chain family. F-type ATPases have 2 components, F(1) - the catalytic core - and F(0) - the membrane proton channel. F(1) has five subunits: alpha(3), beta(3), gamma(1), delta(1), epsilon(1). F(0) has three main subunits: a(1), b(2) and c(10-14). The alpha and beta chains form an alternating ring which encloses part of the gamma chain. F(1) is attached to F(0) by a central stalk formed by the gamma and epsilon chains, while a peripheral stalk is formed by the delta and b chains.

It is found in the cell membrane. Its function is as follows. F(1)F(0) ATP synthase produces ATP from ADP in the presence of a proton or sodium gradient. F-type ATPases consist of two structural domains, F(1) containing the extramembraneous catalytic core and F(0) containing the membrane proton channel, linked together by a central stalk and a peripheral stalk. During catalysis, ATP synthesis in the catalytic domain of F(1) is coupled via a rotary mechanism of the central stalk subunits to proton translocation. Functionally, this protein is part of the stalk that links CF(0) to CF(1). It either transmits conformational changes from CF(0) to CF(1) or is implicated in proton conduction. The polypeptide is ATP synthase subunit delta (Natranaerobius thermophilus (strain ATCC BAA-1301 / DSM 18059 / JW/NM-WN-LF)).